Here is a 360-residue protein sequence, read N- to C-terminus: Phospho-N-acetylmuramoyl-pentapeptide-transferase (360 aa).

10 helical membrane passes run 27-47 (GAMI…INSL), 71-91 (TPTM…LLWA), 93-113 (LASV…AIGF), 128-148 (FSGK…AFVI), 168-188 (FVVN…VGAG), 199-219 (GLAI…AYLS), 239-259 (LAVV…FNAP), 262-282 (AIFM…TVAV), 288-308 (IVLA…IIQV), and 337-357 (QVVI…LSTL).

The protein belongs to the glycosyltransferase 4 family. MraY subfamily. The cofactor is Mg(2+).

It localises to the cell inner membrane. The enzyme catalyses UDP-N-acetyl-alpha-D-muramoyl-L-alanyl-gamma-D-glutamyl-meso-2,6-diaminopimeloyl-D-alanyl-D-alanine + di-trans,octa-cis-undecaprenyl phosphate = di-trans,octa-cis-undecaprenyl diphospho-N-acetyl-alpha-D-muramoyl-L-alanyl-D-glutamyl-meso-2,6-diaminopimeloyl-D-alanyl-D-alanine + UMP. It functions in the pathway cell wall biogenesis; peptidoglycan biosynthesis. Catalyzes the initial step of the lipid cycle reactions in the biosynthesis of the cell wall peptidoglycan: transfers peptidoglycan precursor phospho-MurNAc-pentapeptide from UDP-MurNAc-pentapeptide onto the lipid carrier undecaprenyl phosphate, yielding undecaprenyl-pyrophosphoryl-MurNAc-pentapeptide, known as lipid I. The sequence is that of Phospho-N-acetylmuramoyl-pentapeptide-transferase from Brucella anthropi (strain ATCC 49188 / DSM 6882 / CCUG 24695 / JCM 21032 / LMG 3331 / NBRC 15819 / NCTC 12168 / Alc 37) (Ochrobactrum anthropi).